Reading from the N-terminus, the 972-residue chain is Coatomer subunit beta (972 aa).

HEAT repeat units follow at residues leucine 79 to histidine 113, glutamate 133 to histidine 170, glycine 317 to isoleucine 354, glutamate 397 to glutamine 434, and arginine 481 to proline 518. Residues leucine 494–proline 522 form a disordered region.

In terms of assembly, oligomeric complex that consists of at least the alpha, beta, beta', gamma, delta, epsilon and zeta subunits.

It is found in the cytoplasm. The protein resides in the golgi apparatus membrane. Its subcellular location is the cytoplasmic vesicle. The protein localises to the COPI-coated vesicle membrane. Functionally, the coatomer is a cytosolic protein complex that binds to dilysine motifs and reversibly associates with Golgi non-clathrin-coated vesicles, which further mediate biosynthetic protein transport from the ER, via the Golgi up to the trans Golgi network. Coatomer complex is required for budding from Golgi membranes, and is essential for the retrograde Golgi-to-ER transport of dilysine-tagged proteins. The chain is Coatomer subunit beta from Candida glabrata (strain ATCC 2001 / BCRC 20586 / JCM 3761 / NBRC 0622 / NRRL Y-65 / CBS 138) (Yeast).